Here is a 118-residue protein sequence, read N- to C-terminus: Large ribosomal subunit protein bL20 (118 aa).

This sequence belongs to the bacterial ribosomal protein bL20 family.

Functionally, binds directly to 23S ribosomal RNA and is necessary for the in vitro assembly process of the 50S ribosomal subunit. It is not involved in the protein synthesizing functions of that subunit. In Pseudoalteromonas atlantica (strain T6c / ATCC BAA-1087), this protein is Large ribosomal subunit protein bL20.